Here is a 291-residue protein sequence, read N- to C-terminus: Small ribosomal subunit biogenesis GTPase RsgA (291 aa).

Positions 63 to 221 constitute a CP-type G domain; the sequence is NNELKRPPVS…IADTPGFSAL (159 aa). GTP contacts are provided by residues 112–115 and 164–172; these read TKHD and GQSGVGKST. Zn(2+)-binding residues include Cys-245, Cys-250, His-252, and Cys-258.

Belongs to the TRAFAC class YlqF/YawG GTPase family. RsgA subfamily. In terms of assembly, monomer. Associates with 30S ribosomal subunit, binds 16S rRNA. The cofactor is Zn(2+).

Its subcellular location is the cytoplasm. Functionally, one of several proteins that assist in the late maturation steps of the functional core of the 30S ribosomal subunit. Helps release RbfA from mature subunits. May play a role in the assembly of ribosomal proteins into the subunit. Circularly permuted GTPase that catalyzes slow GTP hydrolysis, GTPase activity is stimulated by the 30S ribosomal subunit. This chain is Small ribosomal subunit biogenesis GTPase RsgA, found in Staphylococcus epidermidis (strain ATCC 12228 / FDA PCI 1200).